A 167-amino-acid chain; its full sequence is 16S rRNA aminocarboxypropyltransferase (167 aa).

Residues Thr17, Val62, Leu84, Tyr99, and Ser103 each coordinate S-adenosyl-L-methionine.

The protein belongs to the TDD superfamily. TSR3 family.

Its subcellular location is the cytoplasm. The enzyme catalyses an N(1)-methylpseudouridine in rRNA + S-adenosyl-L-methionine = N(1)-methyl-N(3)-[(3S)-3-amino-3-carboxypropyl]pseudouridine in rRNA + S-methyl-5'-thioadenosine + H(+). In terms of biological role, aminocarboxypropyltransferase that catalyzes the aminocarboxypropyl transfer on pseudouridine corresponding to position 914 in M.jannaschii 16S rRNA. It constitutes the last step in biosynthesis of the hypermodified N1-methyl-N3-(3-amino-3-carboxypropyl) pseudouridine (m1acp3-Psi). This Sulfurisphaera tokodaii (strain DSM 16993 / JCM 10545 / NBRC 100140 / 7) (Sulfolobus tokodaii) protein is 16S rRNA aminocarboxypropyltransferase.